An 89-amino-acid polypeptide reads, in one-letter code: Large ribosomal subunit protein uL30 (89 aa).

Belongs to the universal ribosomal protein uL30 family. As to quaternary structure, part of the 50S ribosomal subunit.

The polypeptide is Large ribosomal subunit protein uL30 (Myxococcus xanthus (strain DK1622)).